Consider the following 315-residue polypeptide: Ribonuclease Z (315 aa).

The Zn(2+) site is built by H62, H64, D66, H67, H144, D215, and H273. D66 functions as the Proton acceptor in the catalytic mechanism.

It belongs to the RNase Z family. Homodimer. It depends on Zn(2+) as a cofactor.

It catalyses the reaction Endonucleolytic cleavage of RNA, removing extra 3' nucleotides from tRNA precursor, generating 3' termini of tRNAs. A 3'-hydroxy group is left at the tRNA terminus and a 5'-phosphoryl group is left at the trailer molecule.. In terms of biological role, zinc phosphodiesterase, which displays some tRNA 3'-processing endonuclease activity. Probably involved in tRNA maturation, by removing a 3'-trailer from precursor tRNA. The sequence is that of Ribonuclease Z from Synechococcus sp. (strain CC9311).